Consider the following 453-residue polypeptide: Ribose 1,5-bisphosphate phosphokinase PhnN (453 aa).

A disordered region spans residues 1–21 (MHGSTGFVQGTRPAGDQADPL). The tract at residues 1 to 271 (MHGSTGFVQG…SGQGERASLP (271 aa)) is unknown. The interval 272-453 (HSGRIFFCVG…KLLDILRQAK (182 aa)) is ribose 1,5-bisphosphokinase.

This sequence in the C-terminal section; belongs to the ribose 1,5-bisphosphokinase family.

It catalyses the reaction alpha-D-ribose 1,5-bisphosphate + ATP = 5-phospho-alpha-D-ribose 1-diphosphate + ADP. It participates in metabolic intermediate biosynthesis; 5-phospho-alpha-D-ribose 1-diphosphate biosynthesis; 5-phospho-alpha-D-ribose 1-diphosphate from D-ribose 5-phosphate (route II): step 3/3. Catalyzes the phosphorylation of ribose 1,5-bisphosphate to 5-phospho-D-ribosyl alpha-1-diphosphate (PRPP). The protein is Ribose 1,5-bisphosphate phosphokinase PhnN (phnN) of Janthinobacterium sp. (strain Marseille) (Minibacterium massiliensis).